A 428-amino-acid chain; its full sequence is AP2-like ethylene-responsive transcription factor At2g41710 (428 aa).

Residues 1–10 are compositionally biased toward polar residues; that stretch reads MASVSSSDQG. A disordered region spans residues 1-28; it reads MASVSSSDQGPKTEAGCSGGGGGESSET. The AP2/ERF DNA-binding region spans 70-136; it reads IYRGVTRHRW…WGPGTLINFP (67 aa).

Belongs to the AP2/ERF transcription factor family. AP2 subfamily.

The protein resides in the nucleus. In terms of biological role, probably acts as a transcriptional activator. Binds to the GCC-box pathogenesis-related promoter element. May be involved in the regulation of gene expression by stress factors and by components of stress signal transduction pathways. The chain is AP2-like ethylene-responsive transcription factor At2g41710 from Arabidopsis thaliana (Mouse-ear cress).